Here is a 449-residue protein sequence, read N- to C-terminus: Acetolactate synthase small subunit 1, chloroplastic (449 aa).

Residues 1–30 (MEHIQTRTTLSQLSTLPSDKRLGAIRFKCL) constitute a chloroplast transit peptide. ACT domains follow at residues 31–98 (LVMK…DLSK) and 259–333 (TLSM…DITH).

It belongs to the acetolactate synthase small subunit family. In terms of assembly, the acetolactate synthase complex contains both large catalytic subunits and small regulatory subunits.

The protein localises to the plastid. Its subcellular location is the chloroplast. It functions in the pathway amino-acid biosynthesis; L-isoleucine biosynthesis; L-isoleucine from 2-oxobutanoate: step 1/4. Its pathway is amino-acid biosynthesis; L-valine biosynthesis; L-valine from pyruvate: step 1/4. In terms of biological role, regulatory subunit of acetohydroxy-acid synthase. Probably involved in feedback inhibition by branched-chain amino acids. Not involved in herbicide tolerance. The protein is Acetolactate synthase small subunit 1, chloroplastic of Nicotiana plumbaginifolia (Leadwort-leaved tobacco).